Consider the following 175-residue polypeptide: Probable coatomer subunit zeta-A (175 aa).

This sequence belongs to the adaptor complexes small subunit family. As to quaternary structure, oligomeric complex that consists of at least the alpha, beta, beta', gamma, delta, epsilon and zeta subunits.

Its subcellular location is the cytoplasm. It localises to the golgi apparatus membrane. The protein resides in the cytoplasmic vesicle. The protein localises to the COPI-coated vesicle membrane. Functionally, the coatomer is a cytosolic protein complex that binds to dilysine motifs and reversibly associates with Golgi non-clathrin-coated vesicles, which further mediate biosynthetic protein transport from the ER, via the Golgi up to the trans Golgi network. Coatomer complex is required for budding from Golgi membranes, and is essential for the retrograde Golgi-to-ER transport of dilysine-tagged proteins. The zeta subunit may be involved in regulating the coat assembly and, hence, the rate of biosynthetic protein transport due to its association-dissociation properties with the coatomer complex. The polypeptide is Probable coatomer subunit zeta-A (copZa) (Dictyostelium discoideum (Social amoeba)).